Consider the following 414-residue polypeptide: Esterase FrsA (414 aa).

This sequence belongs to the FrsA family.

It carries out the reaction a carboxylic ester + H2O = an alcohol + a carboxylate + H(+). Catalyzes the hydrolysis of esters. In Escherichia coli O157:H7, this protein is Esterase FrsA.